Here is an 898-residue protein sequence, read N- to C-terminus: MAIQKLENYNNKEAIREEVTILTSILEEVAAQMMPAETFAKIVELSQLSRQDDYQALIAIISQLNNDELAVISRYFAVLPLLINISEDVDLAYEINHQNNIDQDYLGKISTTIDMVSKQENAAEILEKLNVVPVLTAHPTQVQRQSMLDLTKHIHELLRRYRDVKLGLLNKNKWEDELRCYIEIIMQTDMIREKKLKVTNEITNVMEYYNSSFIKAVTKLQREYKRLAAEKGIVLNNPRPITMGMWIGGDRDGNPFVTAETLKLSALTQCEVIMNYYDEQLYKLYRNFSLSTSIVNVSTAVKMLADLSEDSSVYRENEPYRRAFHYIQMKLANTRDYLVHNKPSDVRYSNVAEFKADLLAIKQSLVENKSMALLKGDFTELLEAVEAFGFYLASIDMRQDSSIHEASVAELLASARIVEDYSSLSEEAKCHVLLKQLETDPRILSATHMPKSEQLEKELAIFAAARELKDKLGEEIIKQHIISHSESVSDLLELAVLLKEVGLVDVDKARVQIVPLFETIEDLDNAPDTMRQYLQLDLAKRWIAGNKYYQEIMLGYSDSNKDGGYLSSGWTLYKAQNELTQIGQDYGVNITFFHGRGGTVGRGGGPSYDAITSQPFGSIKDRLRLTEQGEVIGNKYGNKDAAYYNLEMLVSATLDRMVTQMITDPNEIDGYRETMDEIVSDSYRIYRDLVFNNPHFYDYFFAASPIREVSSLNIGSRPAARKTITEIGGLRAIPWVFSWSQNRVMLPGWYGVGSSFKRFIDKHPDNLSKLQKMYESWPFFRSLLSNVDMVLSKSNMNIAFEYAKMCESEEVRNIFHVILDEWQLTKEIILSIEQNDELLAELPFLKASLDYRMPYFNVLNYIQIELIHRLRRGELSKEQENLIHITINGVATGLRNSG.

Catalysis depends on residues His-138 and Lys-561.

Belongs to the PEPCase type 1 family. The cofactor is Mg(2+).

It catalyses the reaction oxaloacetate + phosphate = phosphoenolpyruvate + hydrogencarbonate. Forms oxaloacetate, a four-carbon dicarboxylic acid source for the tricarboxylic acid cycle. The chain is Phosphoenolpyruvate carboxylase from Streptococcus suis (strain 98HAH33).